A 283-amino-acid chain; its full sequence is MVDTTQTTTEKKLTQSDIRGVFLRSNLFQGSWNFERMQALGFCFSMVPAIRRLYPENNEARKQAIRRHLEFFNTQPFVAAPILGVTLALEEQRANGAEIDDGAINGIKVGLMGPLAGVGDPIFWGTVRPVFAALGAGIAMSGSLLGPLLFFILFNLVRLATRYYGVAYGYSKGIDIVKDMGGGFLQKLTEGASILGLFVMGALVNKWTHVNIPLVVSRITDQTGKEHVTTVQTILDQLMPGLVPLLLTFACMWLLRKKVNPLWIIVGFFVIGIAGYACGLLGL.

Met1 is modified (N-formylmethionine). Topologically, residues 1 to 14 (MVDTTQTTTEKKLT) are cytoplasmic. Residues 11–281 (KKLTQSDIRG…GIAGYACGLL (271 aa)) form the PTS EIID domain. An intramembrane segment occupies 15–52 (QSDIRGVFLRSNLFQGSWNFERMQALGFCFSMVPAIRR). Topologically, residues 53–59 (LYPENNE) are cytoplasmic. Residues 60 to 92 (ARKQAIRRHLEFFNTQPFVAAPILGVTLALEEQ) lie within the membrane without spanning it. Topologically, residues 93-100 (RANGAEID) are cytoplasmic. Positions 101–140 (DGAINGIKVGLMGPLAGVGDPIFWGTVRPVFAALGAGIAM) form a transmembrane segment. The Periplasmic segment spans residues 141–144 (SGSL). The chain crosses the lipid bilayer at residues 145–173 (LGPLLFFILFNLVRLATRYYGVAYGYSKG). Topologically, residues 174 to 183 (IDIVKDMGGG) are cytoplasmic. The hydrophobic stretch at 184–209 (FLQKLTEGASILGLFVMGALVNKWTH) threads the membrane. Topologically, residues 210–241 (VNIPLVVSRITDQTGKEHVTTVQTILDQLMPG) are periplasmic. A membrane pass occupies residues 242–255 (LVPLLLTFACMWLL). Topologically, residues 256–261 (RKKVNP) are cytoplasmic. Residues 262–280 (LWIIVGFFVIGIAGYACGL) are membrane-embedded. Topologically, residues 281 to 283 (LGL) are periplasmic.

In terms of assembly, homotrimer of protomers that are composed of two subunits, IIC and IID.

It localises to the cell inner membrane. Its function is as follows. The phosphoenolpyruvate-dependent sugar phosphotransferase system (sugar PTS), a major carbohydrate active transport system, catalyzes the phosphorylation of incoming sugar substrates concomitantly with their translocation across the cell membrane. The enzyme II ManXYZ PTS system is involved in mannose transport. The polypeptide is PTS system mannose-specific EIID component (manZ) (Escherichia coli O157:H7).